The following is a 494-amino-acid chain: Amidophosphoribosyltransferase (494 aa).

Positions 1–10 (MFNYSGLNEE) are excised as a propeptide. The active-site Nucleophile is the cysteine 11. In terms of domain architecture, Glutamine amidotransferase type-2 spans 11–231 (CGVFGIWNHP…AGEYVVINDK (221 aa)). Serine 294, aspartate 356, and aspartate 357 together coordinate Mg(2+).

It in the C-terminal section; belongs to the purine/pyrimidine phosphoribosyltransferase family. It depends on Mg(2+) as a cofactor.

The catalysed reaction is 5-phospho-beta-D-ribosylamine + L-glutamate + diphosphate = 5-phospho-alpha-D-ribose 1-diphosphate + L-glutamine + H2O. Its pathway is purine metabolism; IMP biosynthesis via de novo pathway; N(1)-(5-phospho-D-ribosyl)glycinamide from 5-phospho-alpha-D-ribose 1-diphosphate: step 1/2. In terms of biological role, catalyzes the formation of phosphoribosylamine from phosphoribosylpyrophosphate (PRPP) and glutamine. This is Amidophosphoribosyltransferase from Staphylococcus aureus (strain Mu50 / ATCC 700699).